We begin with the raw amino-acid sequence, 155 residues long: Ribonuclease H (155 aa).

An RNase H type-1 domain is found at 1 to 142 (MLKQVEIFTD…CDELARAAAM (142 aa)). Aspartate 10, glutamate 48, aspartate 70, and aspartate 134 together coordinate Mg(2+).

It belongs to the RNase H family. Monomer. The cofactor is Mg(2+).

It localises to the cytoplasm. It catalyses the reaction Endonucleolytic cleavage to 5'-phosphomonoester.. Endonuclease that specifically degrades the RNA of RNA-DNA hybrids. In Citrobacter koseri (strain ATCC BAA-895 / CDC 4225-83 / SGSC4696), this protein is Ribonuclease H.